We begin with the raw amino-acid sequence, 878 residues long: MATAPSYPAGLPGSPGPGSPPPPGGLELQSPPPLLPQIPAPGSGVSFHIQIGLTREFVLLPAASELAHVKQLACSIVDQKFPECGFYGLYDKILLFKHDPTSANLLQLVRSSGDIQEGDLVEVVLSASATFEDFQIRPHALTVHSYRAPAFCDHCGEMLFGLVRQGLKCDGCGLNYHKRCAFSIPNNCSGARKRRLSSTSLASGHSVRLGTSESLPCTAEELSRSTTELLPRRPPSSSSSSSASSYTGRPIELDKMLLSKVKVPHTFLIHSYTRPTVCQACKKLLKGLFRQGLQCKDCKFNCHKRCATRVPNDCLGEALINGDVPMEEATDFSEADKSALMDESEDSGVIPGSHSENALHASEEEEGEGGKAQSSLGYIPLMRVVQSVRHTTRKSSTTLREGWVVHYSNKDTLRKRHYWRLDCKCITLFQNNTTNRYYKEIPLSEILTVESAQNFSLVPPGTNPHCFEIVTANATYFVGEMPGGTPGGPSGQGAEAARGWETAIRQALMPVILQDAPSAPGHAPHRQASLSISVSNSQIQENVDIATVYQIFPDEVLGSGQFGVVYGGKHRKTGRDVAVKVIDKLRFPTKQESQLRNEVAILQSLRHPGIVNLECMFETPEKVFVVMEKLHGDMLEMILSSEKGRLPERLTKFLITQILVALRHLHFKNIVHCDLKPENVLLASADPFPQVKLCDFGFARIIGEKSFRRSVVGTPAYLAPEVLLNQGYNRSLDMWSVGVIMYVSLSGTFPFNEDEDINDQIQNAAFMYPASPWSHISAGAIDLINNLLQVKMRKRYSVDKSLSHPWLQEYQTWLDLRELEGKMGERYITHESDDARWEQFAAEHPLPGSGLPTDRDLGGACPPQDHDMQGLAERISVL.

A compositionally biased stretch (low complexity) spans 1–12; that stretch reads MATAPSYPAGLP. Residues 1–35 form a disordered region; it reads MATAPSYPAGLPGSPGPGSPPPPGGLELQSPPPLL. Over residues 14–35 the composition is skewed to pro residues; sequence SPGPGSPPPPGGLELQSPPPLL. At Ser30 the chain carries Phosphoserine. Tyr87 bears the Phosphotyrosine mark. Residues 138 to 188 form a Phorbol-ester/DAG-type 1 zinc finger; the sequence is PHALTVHSYRAPAFCDHCGEMLFGLVRQGLKCDGCGLNYHKRCAFSIPNNC. 7 positions are modified to phosphoserine: Ser197, Ser198, Ser200, Ser203, Ser206, Ser212, and Ser214. The disordered stretch occupies residues 224-247; it reads RSTTELLPRRPPSSSSSSSASSYT. Residues 236–245 show a composition bias toward low complexity; sequence SSSSSSSASS. Phosphoserine; by CSNK1D and CSNK1E is present on Ser244. The Phorbol-ester/DAG-type 2 zinc-finger motif lies at 264–314; sequence PHTFLIHSYTRPTVCQACKKLLKGLFRQGLQCKDCKFNCHKRCATRVPNDC. The tract at residues 343-373 is disordered; it reads ESEDSGVIPGSHSENALHASEEEEGEGGKAQ. One can recognise a PH domain in the interval 397–509; that stretch reads TTLREGWVVH…WETAIRQALM (113 aa). Tyr407 carries the phosphotyrosine modification. Tyr438 is subject to Phosphotyrosine; by ABL1. Ser518 is subject to Phosphoserine. The Protein kinase domain occupies 551-807; it reads IFPDEVLGSG…VDKSLSHPWL (257 aa). ATP contacts are provided by residues 557–565 and Lys580; that span reads LGSGQFGVV. Asp674 functions as the Proton acceptor in the catalytic mechanism. Ser706 carries the phosphoserine; by PKC modification. Residue Ser710 is modified to Phosphoserine. A Phosphotyrosine; by ABL1 modification is found at Tyr717. An Important for ABL1-mediated Tyr-717 phosphorylation motif is present at residues 724–726; the sequence is LNQ. The disordered stretch occupies residues 844 to 869; the sequence is HPLPGSGLPTDRDLGGACPPQDHDMQ. Phosphoserine; by autocatalysis is present on Ser876.

Belongs to the protein kinase superfamily. CAMK Ser/Thr protein kinase family. PKD subfamily. In terms of assembly, interacts (via C-terminus) with LCK. Interacts (via N-terminal AP-rich region) with CIB1 isoform 2. Interacts (via N-terminus and zing-finger domain 1 and 2) with PRKCD in response to oxidative stress; the interaction is independent of PRKD2 tyrosine phosphorylation. Mg(2+) is required as a cofactor. Phosphorylation of Ser-876 correlates with the activation status of the kinase. Ser-706 or/and Ser-710 are probably phosphorylated by PKC. Phosphorylation at Ser-244 by CSNK1D and CSNK1E promotes nuclear localization and substrate targeting. Phosphorylation at Ser-244, Ser-706 and Ser-710 is required for nuclear localization. Phosphorylated at Tyr-438 by ABL1 in response to oxidative stress. Phosphorylated at Tyr-717 by ABL1 specifically in response to oxidative stress; requires prior phosphorylation at Ser-706 or/and Ser-710. In terms of tissue distribution, widely expressed.

The protein resides in the cytoplasm. It localises to the cell membrane. The protein localises to the nucleus. Its subcellular location is the golgi apparatus. It is found in the trans-Golgi network. It carries out the reaction L-seryl-[protein] + ATP = O-phospho-L-seryl-[protein] + ADP + H(+). The enzyme catalyses L-threonyl-[protein] + ATP = O-phospho-L-threonyl-[protein] + ADP + H(+). With respect to regulation, activated by DAG and phorbol esters. Phorbol-ester/DAG-type domains bind DAG, mediating translocation to membranes. Autophosphorylation of Ser-710 and phosphorylation of Ser-706 by PKC relieves auto-inhibition by the PH domain. Catalytic activity is further increased by phosphorylation at Tyr-717 in response to oxidative stress. In terms of biological role, serine/threonine-protein kinase that converts transient diacylglycerol (DAG) signals into prolonged physiological effects downstream of PKC, and is involved in the regulation of cell proliferation via MAPK1/3 (ERK1/2) signaling, oxidative stress-induced NF-kappa-B activation, inhibition of HDAC7 transcriptional repression, signaling downstream of T-cell antigen receptor (TCR) and cytokine production, and plays a role in Golgi membrane trafficking, angiogenesis, secretory granule release and cell adhesion. May potentiate mitogenesis induced by the neuropeptide bombesin by mediating an increase in the duration of MAPK1/3 (ERK1/2) signaling, which leads to accumulation of immediate-early gene products including FOS that stimulate cell cycle progression. In response to oxidative stress, is phosphorylated at Tyr-438 and Tyr-717 by ABL1, which leads to the activation of PRKD2 without increasing its catalytic activity, and mediates activation of NF-kappa-B. In response to the activation of the gastrin receptor CCKBR, is phosphorylated at Ser-244 by CSNK1D and CSNK1E, translocates to the nucleus, phosphorylates HDAC7, leading to nuclear export of HDAC7 and inhibition of HDAC7 transcriptional repression of NR4A1/NUR77. Upon TCR stimulation, is activated independently of ZAP70, translocates from the cytoplasm to the nucleus and is required for interleukin-2 (IL2) promoter up-regulation. During adaptive immune responses, is required in peripheral T-lymphocytes for the production of the effector cytokines IL2 and IFNG after TCR engagement and for optimal induction of antibody responses to antigens. In epithelial cells stimulated with lysophosphatidic acid (LPA), is activated through a PKC-dependent pathway and mediates LPA-stimulated interleukin-8 (IL8) secretion via a NF-kappa-B-dependent pathway. During TCR-induced T-cell activation, interacts with and is activated by the tyrosine kinase LCK, which results in the activation of the NFAT transcription factors. In the trans-Golgi network (TGN), regulates the fission of transport vesicles that are on their way to the plasma membrane and in polarized cells is involved in the transport of proteins from the TGN to the basolateral membrane. Plays an important role in endothelial cell proliferation and migration prior to angiogenesis, partly through modulation of the expression of KDR/VEGFR2 and FGFR1, two key growth factor receptors involved in angiogenesis. In secretory pathway, is required for the release of chromogranin-A (CHGA)-containing secretory granules from the TGN. Downstream of PRKCA, plays important roles in angiotensin-2-induced monocyte adhesion to endothelial cells. Plays a regulatory role in angiogenesis and tumor growth by phosphorylating a downstream mediator CIB1 isoform 2, resulting in vascular endothelial growth factor A (VEGFA) secretion. This chain is Serine/threonine-protein kinase D2 (PRKD2), found in Homo sapiens (Human).